We begin with the raw amino-acid sequence, 269 residues long: Cytochrome c oxidase subunit 3 (269 aa).

Residues 1–22 (MTNLIRSNFQDHPFHLVSPSPW) are Mitochondrial matrix-facing. Residues 23–41 (PLNTSVCLLNLTTTGALSM) form a helical membrane-spanning segment. Topologically, residues 42–48 (HNFNNIH) are mitochondrial intermembrane. Residues 49–73 (YLYYIALIGLVSAMFLWFRDIISEG) traverse the membrane as a helical segment. Residues 74-80 (TFLGDHT) are Mitochondrial matrix-facing. A helical membrane pass occupies residues 81 to 114 (LAVQRGLNLGIILFIVSEALFFLAIFWAFFHSAL). Residues 115–137 (TPTVELGAQWPPIGIEPVNPFEL) lie on the Mitochondrial intermembrane side of the membrane. A helical transmembrane segment spans residues 138-161 (PLLNTVILLSSGATITYAHHALIK). Residues 162–164 (GER) lie on the Mitochondrial matrix side of the membrane. A helical transmembrane segment spans residues 165-188 (EGALYGSIATILLAIIFTGFQGVE). Residues 189 to 201 (YSVSSFTISDGAF) lie on the Mitochondrial intermembrane side of the membrane. The chain crosses the membrane as a helical span at residues 202-230 (GTCFFFSTGFHGIHVIIGTIFLAVALWRI). At 231–248 (FAYHLTDNHHVGFEGGIL) the chain is on the mitochondrial matrix side. A helical transmembrane segment spans residues 249-265 (YWHFVDVVWLFLYISVY). The Mitochondrial intermembrane portion of the chain corresponds to 266-269 (YWGS).

This sequence belongs to the cytochrome c oxidase subunit 3 family. In terms of assembly, component of the cytochrome c oxidase (complex IV, CIV), a multisubunit enzyme composed of 11 subunits. The complex is composed of a catalytic core of 3 subunits Cox1, Cox2 and Cox3, encoded in the mitochondrial DNA, and 8 supernumerary subunits Cox4, Cox5a/Cox5, Cox6, Cox7, Cox8, Cox7a/Cox9, Cox6b/Cox12 and Cox6a/Cox13, which are encoded in the nuclear genome. The complex exists as a monomer or a dimer and forms respiratory supercomplexes (SCs) in the inner mitochondrial membrane with NADH-ubiquinone oxidoreductase (complex I, CI) and ubiquinol-cytochrome c oxidoreductase (cytochrome b-c1 complex, complex III, CIII), resulting in various different assemblies (supercomplexes I(1)IV(1), I(1)III(3)IV(2), III(2)IV(1) and III(2)IV(2) as well as larger supercomplexes of compositions like I(1)III(2)IV(5-6)).

It localises to the mitochondrion inner membrane. The enzyme catalyses 4 Fe(II)-[cytochrome c] + O2 + 8 H(+)(in) = 4 Fe(III)-[cytochrome c] + 2 H2O + 4 H(+)(out). In terms of biological role, component of the cytochrome c oxidase, the last enzyme in the mitochondrial electron transport chain which drives oxidative phosphorylation. The respiratory chain contains 3 multisubunit complexes succinate dehydrogenase (complex II, CII), ubiquinol-cytochrome c oxidoreductase (cytochrome b-c1 complex, complex III, CIII) and cytochrome c oxidase (complex IV, CIV), that cooperate to transfer electrons derived from NADH and succinate to molecular oxygen, creating an electrochemical gradient over the inner membrane that drives transmembrane transport and the ATP synthase. Cytochrome c oxidase is the component of the respiratory chain that catalyzes the reduction of oxygen to water. Electrons originating from reduced cytochrome c in the intermembrane space (IMS) are transferred via the dinuclear copper A center (CU(A)) of Cox2 and heme A of Cox1 to the active site in Cox1, a binuclear center (BNC) formed by heme A3 and copper B (CU(B)). The BNC reduces molecular oxygen to 2 water molecules using 4 electrons from cytochrome c in the IMS and 4 protons from the mitochondrial matrix. In Neurospora crassa (strain ATCC 24698 / 74-OR23-1A / CBS 708.71 / DSM 1257 / FGSC 987), this protein is Cytochrome c oxidase subunit 3 (cox-3).